Here is a 62-residue protein sequence, read N- to C-terminus: U-myrmeciitoxin(01)-Mg3a (62 aa).

The signal sequence occupies residues 1-24 (MKTTVILLLAIAIIFAIMTTLTSA).

In terms of tissue distribution, expressed by the venom gland.

It is found in the secreted. May have antimicrobial properties, like most ant linear peptides. This chain is U-myrmeciitoxin(01)-Mg3a, found in Myrmecia gulosa (Red bulldog ant).